The chain runs to 276 residues: Putative pyruvate, phosphate dikinase regulatory protein 2 (276 aa).

146-153 (GVSRTSKT) contacts ADP.

The protein belongs to the pyruvate, phosphate/water dikinase regulatory protein family. PDRP subfamily.

It carries out the reaction N(tele)-phospho-L-histidyl/L-threonyl-[pyruvate, phosphate dikinase] + ADP = N(tele)-phospho-L-histidyl/O-phospho-L-threonyl-[pyruvate, phosphate dikinase] + AMP + H(+). It catalyses the reaction N(tele)-phospho-L-histidyl/O-phospho-L-threonyl-[pyruvate, phosphate dikinase] + phosphate + H(+) = N(tele)-phospho-L-histidyl/L-threonyl-[pyruvate, phosphate dikinase] + diphosphate. Its function is as follows. Bifunctional serine/threonine kinase and phosphorylase involved in the regulation of the pyruvate, phosphate dikinase (PPDK) by catalyzing its phosphorylation/dephosphorylation. The protein is Putative pyruvate, phosphate dikinase regulatory protein 2 of Enterococcus faecalis (strain ATCC 700802 / V583).